The following is a 196-amino-acid chain: Molybdenum cofactor guanylyltransferase (196 aa).

Residues 10–12 (LAG), Lys-23, Asn-51, Asp-69, and Asp-99 contribute to the GTP site. Asp-99 contributes to the Mg(2+) binding site.

It belongs to the MobA family. Monomer. Mg(2+) serves as cofactor.

It localises to the cytoplasm. It carries out the reaction Mo-molybdopterin + GTP + H(+) = Mo-molybdopterin guanine dinucleotide + diphosphate. Its function is as follows. Transfers a GMP moiety from GTP to Mo-molybdopterin (Mo-MPT) cofactor (Moco or molybdenum cofactor) to form Mo-molybdopterin guanine dinucleotide (Mo-MGD) cofactor. This chain is Molybdenum cofactor guanylyltransferase, found in Shewanella amazonensis (strain ATCC BAA-1098 / SB2B).